Here is a 940-residue protein sequence, read N- to C-terminus: Isoleucine--tRNA ligase (940 aa).

The 'HIGH' region signature appears at 59-69 (PYANGDIHIGH). Glu-563 provides a ligand contact to L-isoleucyl-5'-AMP. The 'KMSKS' region signature appears at 604-608 (KMSKS). Residue Lys-607 coordinates ATP. Cys-903, Cys-906, Cys-923, and Cys-926 together coordinate Zn(2+).

The protein belongs to the class-I aminoacyl-tRNA synthetase family. IleS type 1 subfamily. As to quaternary structure, monomer. Requires Zn(2+) as cofactor.

It localises to the cytoplasm. It carries out the reaction tRNA(Ile) + L-isoleucine + ATP = L-isoleucyl-tRNA(Ile) + AMP + diphosphate. Its function is as follows. Catalyzes the attachment of isoleucine to tRNA(Ile). As IleRS can inadvertently accommodate and process structurally similar amino acids such as valine, to avoid such errors it has two additional distinct tRNA(Ile)-dependent editing activities. One activity is designated as 'pretransfer' editing and involves the hydrolysis of activated Val-AMP. The other activity is designated 'posttransfer' editing and involves deacylation of mischarged Val-tRNA(Ile). The polypeptide is Isoleucine--tRNA ligase (Wigglesworthia glossinidia brevipalpis).